The following is a 198-amino-acid chain: Putative manganese efflux pump MntP (198 aa).

The next 6 helical transmembrane spans lie at 3–23, 37–57, 65–85, 105–127, 131–153, and 171–191; these read SIEL…VAIC, VLTG…GYLL, ITSI…INMI, SLTV…FAFL, IIPA…VKIG, and ILIG…SFVF.

This sequence belongs to the MntP (TC 9.B.29) family.

The protein resides in the cell membrane. In terms of biological role, probably functions as a manganese efflux pump. This is Putative manganese efflux pump MntP from Acetivibrio thermocellus (strain ATCC 27405 / DSM 1237 / JCM 9322 / NBRC 103400 / NCIMB 10682 / NRRL B-4536 / VPI 7372) (Clostridium thermocellum).